The sequence spans 110 residues: Iron-sulfur cluster assembly protein CyaY (110 aa).

This sequence belongs to the frataxin family.

Its function is as follows. Involved in iron-sulfur (Fe-S) cluster assembly. May act as a regulator of Fe-S biogenesis. This Variovorax paradoxus (strain S110) protein is Iron-sulfur cluster assembly protein CyaY.